The chain runs to 172 residues: MFSRAARSLVMRTGLRTRGTGTHSPGDAAGSQRRMTPYVDCYAQRSYPMPDEPFCTELSEEQRALKEKEKGSWTQLSQAEKVALYRLQFHETFAEMNHRSNEWKTVMGCVFFFIGFTALVIWWQRVYVFPKKVVTLTEERKAQQLQRLLDMKSNPIQGLAAHWDYEKKEWKK.

The transit peptide at 1–34 directs the protein to the mitochondrion; the sequence is MFSRAARSLVMRTGLRTRGTGTHSPGDAAGSQRR. The span at 13 to 22 shows a compositional bias: low complexity; the sequence is TGLRTRGTGT. Residues 13–32 are disordered; that stretch reads TGLRTRGTGTHSPGDAAGSQ. The Mitochondrial matrix segment spans residues 35-101; the sequence is MTPYVDCYAQ…TFAEMNHRSN (67 aa). Residues 102–127 form a helical membrane-spanning segment; it reads EWKTVMGCVFFFIGFTALVIWWQRVY. Residues 128-172 are Mitochondrial intermembrane-facing; sequence VFPKKVVTLTEERKAQQLQRLLDMKSNPIQGLAAHWDYEKKEWKK.

Belongs to the cytochrome c oxidase IV family. In terms of assembly, component of the cytochrome c oxidase (complex IV, CIV), a multisubunit enzyme composed of 14 subunits. The complex is composed of a catalytic core of 3 subunits MT-CO1, MT-CO2 and MT-CO3, encoded in the mitochondrial DNA, and 11 supernumerary subunits COX4I, COX5A, COX5B, COX6A, COX6B, COX6C, COX7A, COX7B, COX7C, COX8 and NDUFA4, which are encoded in the nuclear genome. The complex exists as a monomer or a dimer and forms supercomplexes (SCs) in the inner mitochondrial membrane with NADH-ubiquinone oxidoreductase (complex I, CI) and ubiquinol-cytochrome c oxidoreductase (cytochrome b-c1 complex, complex III, CIII), resulting in different assemblies (supercomplex SCI(1)III(2)IV(1) and megacomplex MCI(2)III(2)IV(2)).

It is found in the mitochondrion inner membrane. The protein operates within energy metabolism; oxidative phosphorylation. Component of the cytochrome c oxidase, the last enzyme in the mitochondrial electron transport chain which drives oxidative phosphorylation. The respiratory chain contains 3 multisubunit complexes succinate dehydrogenase (complex II, CII), ubiquinol-cytochrome c oxidoreductase (cytochrome b-c1 complex, complex III, CIII) and cytochrome c oxidase (complex IV, CIV), that cooperate to transfer electrons derived from NADH and succinate to molecular oxygen, creating an electrochemical gradient over the inner membrane that drives transmembrane transport and the ATP synthase. Cytochrome c oxidase is the component of the respiratory chain that catalyzes the reduction of oxygen to water. Electrons originating from reduced cytochrome c in the intermembrane space (IMS) are transferred via the dinuclear copper A center (CU(A)) of subunit 2 and heme A of subunit 1 to the active site in subunit 1, a binuclear center (BNC) formed by heme A3 and copper B (CU(B)). The BNC reduces molecular oxygen to 2 water molecules using 4 electrons from cytochrome c in the IMS and 4 protons from the mitochondrial matrix. In Mus musculus (Mouse), this protein is Cytochrome c oxidase subunit 4 isoform 2, mitochondrial (Cox4i2).